Consider the following 260-residue polypeptide: 5'-nucleotidase SurE (260 aa).

A divalent metal cation contacts are provided by aspartate 10, aspartate 11, serine 41, and asparagine 95.

It belongs to the SurE nucleotidase family. Requires a divalent metal cation as cofactor.

The protein localises to the cytoplasm. It catalyses the reaction a ribonucleoside 5'-phosphate + H2O = a ribonucleoside + phosphate. Nucleotidase that shows phosphatase activity on nucleoside 5'-monophosphates. The sequence is that of 5'-nucleotidase SurE from Methanoregula boonei (strain DSM 21154 / JCM 14090 / 6A8).